Consider the following 225-residue polypeptide: Small ribosomal subunit protein uS2 (225 aa).

Residues 1–13 are compositionally biased toward basic and acidic residues; that stretch reads MAEAKPALEKEAA. The segment at 1–33 is disordered; the sequence is MAEAKPALEKEAAVKTGSIPSESEDETASHKEG.

The protein belongs to the universal ribosomal protein uS2 family.

This chain is Small ribosomal subunit protein uS2, found in Methanosarcina acetivorans (strain ATCC 35395 / DSM 2834 / JCM 12185 / C2A).